We begin with the raw amino-acid sequence, 438 residues long: V-type ATP synthase beta chain (438 aa).

It belongs to the ATPase alpha/beta chains family.

Produces ATP from ADP in the presence of a proton gradient across the membrane. The V-type beta chain is a regulatory subunit. This chain is V-type ATP synthase beta chain, found in Chlamydia trachomatis serovar L2b (strain UCH-1/proctitis).